The following is a 491-amino-acid chain: UDP-GalNAc:beta-1,3-N-acetylgalactosaminyltransferase 2 (491 aa).

The Cytoplasmic segment spans residues 1 to 2 (MR). Residues 3–23 (SAAAALSVCVLAVLLHWICWT) traverse the membrane as a helical; Signal-anchor for type II membrane protein segment. At 24–491 (DRSAELLGFR…NKCGDPCGCS (468 aa)) the chain is on the lumenal side. N-linked (GlcNAc...) asparagine glycosylation is found at asparagine 167 and asparagine 230.

This sequence belongs to the glycosyltransferase 31 family.

Its subcellular location is the golgi apparatus membrane. The protein localises to the endoplasmic reticulum. The catalysed reaction is 3-O-(N-acetyl-beta-D-glucosaminyl-(1-&gt;4)-alpha-D-mannosyl)-L-threonyl-[protein] + UDP-N-acetyl-alpha-D-galactosamine = 3-O-[beta-D-GalNAc-(1-&gt;3)-beta-D-GlcNAc-(1-&gt;4)-alpha-D-Man]-L-Thr-[protein] + UDP + H(+). It functions in the pathway protein modification; protein glycosylation. Its function is as follows. Beta-1,3-N-acetylgalactosaminyltransferase that synthesizes a unique carbohydrate structure, GalNAc-beta-1-3GlcNAc, on N- and O-glycans. Has no galactose nor galactosaminyl transferase activity toward any acceptor substrate. Involved in alpha-dystroglycan (dag1) glycosylation. This Danio rerio (Zebrafish) protein is UDP-GalNAc:beta-1,3-N-acetylgalactosaminyltransferase 2 (b3galnt2).